Reading from the N-terminus, the 170-residue chain is Myosin regulatory light chain 11 (170 aa).

Alanine 2 is modified (n,N,N-trimethylalanine). Serine 16 and serine 17 each carry phosphoserine. Phosphothreonine is present on residues threonine 26 and threonine 36. The EF-hand 1 domain maps to 26-61 (TQIQEFKEAFTVIDQNRDGIIDKEDLRDTFAAMGRL). Ca(2+) is bound by residues aspartate 39, asparagine 41, aspartate 43, and aspartate 50. Serine 76 carries the phosphoserine modification. EF-hand domains are found at residues 96–131 (DPEDVITGAFKVLDPEGKGTIKKQFLEELLTTQCDR) and 132–167 (FSQEEIKNMWAAFPPDVGGNVDYKNICYVITHGDAK). Residue threonine 102 is modified to Phosphothreonine.

Myosin is a hexamer of 2 heavy chains and 4 light chains. N,N,N-trimethylalanine found in this myosin light chain would not have been detected in the N-terminal tryptic peptide in PubMed:863872 and PubMed:352892 because it would remain trimethylated and ninhydrin negative after hydrolysis.

Its function is as follows. Myosin regulatory subunit that plays an essential role to maintain muscle integrity during early development. Plays a role in muscle contraction. The chain is Myosin regulatory light chain 11 (MYL11) from Oryctolagus cuniculus (Rabbit).